The following is a 623-amino-acid chain: DNA-directed RNA polymerase subunit beta' (623 aa).

Zn(2+)-binding residues include Cys-70, Cys-72, Cys-85, and Cys-88. 3 residues coordinate Mg(2+): Asp-466, Asp-468, and Asp-470.

It belongs to the RNA polymerase beta' chain family. RpoC1 subfamily. In plastids the minimal PEP RNA polymerase catalytic core is composed of four subunits: alpha, beta, beta', and beta''. When a (nuclear-encoded) sigma factor is associated with the core the holoenzyme is formed, which can initiate transcription. It depends on Mg(2+) as a cofactor. Zn(2+) serves as cofactor.

The protein resides in the plastid. It is found in the chloroplast. The catalysed reaction is RNA(n) + a ribonucleoside 5'-triphosphate = RNA(n+1) + diphosphate. Its function is as follows. DNA-dependent RNA polymerase catalyzes the transcription of DNA into RNA using the four ribonucleoside triphosphates as substrates. This is DNA-directed RNA polymerase subunit beta' from Guillardia theta (Cryptophyte).